We begin with the raw amino-acid sequence, 302 residues long: tRNA dimethylallyltransferase (302 aa).

2–9 (GPTACGKS) serves as a coordination point for ATP. 4–9 (TACGKS) contacts substrate. Interaction with substrate tRNA stretches follow at residues 27 to 30 (DSAL) and 149 to 153 (QRLIR).

The protein belongs to the IPP transferase family. Monomer. Mg(2+) serves as cofactor.

The catalysed reaction is adenosine(37) in tRNA + dimethylallyl diphosphate = N(6)-dimethylallyladenosine(37) in tRNA + diphosphate. Its function is as follows. Catalyzes the transfer of a dimethylallyl group onto the adenine at position 37 in tRNAs that read codons beginning with uridine, leading to the formation of N6-(dimethylallyl)adenosine (i(6)A). The chain is tRNA dimethylallyltransferase from Buchnera aphidicola subsp. Acyrthosiphon pisum (strain 5A).